A 60-amino-acid polypeptide reads, in one-letter code: Venom protein 4.1 (60 aa).

The N-terminal stretch at 1–26 (MKALCAILLVLFACSVMFEHFSISTA) is a signal peptide.

The protein belongs to the non-disulfide-bridged peptide (NDBP) superfamily. As to expression, expressed by the venom gland.

The protein localises to the secreted. In Lychas mucronatus (Chinese swimming scorpion), this protein is Venom protein 4.1.